Here is a 61-residue protein sequence, read N- to C-terminus: Small ribosomal subunit protein uS14 (61 aa).

Cys-24, Cys-27, Cys-40, and Cys-43 together coordinate Zn(2+).

It belongs to the universal ribosomal protein uS14 family. Zinc-binding uS14 subfamily. In terms of assembly, part of the 30S ribosomal subunit. Contacts proteins S3 and S10. Zn(2+) serves as cofactor.

In terms of biological role, binds 16S rRNA, required for the assembly of 30S particles and may also be responsible for determining the conformation of the 16S rRNA at the A site. This is Small ribosomal subunit protein uS14 from Desulfitobacterium hafniense (strain Y51).